The chain runs to 119 residues: Holo-[acyl-carrier-protein] synthase (119 aa).

Positions 8 and 59 each coordinate Mg(2+).

It belongs to the P-Pant transferase superfamily. AcpS family. Requires Mg(2+) as cofactor.

The protein localises to the cytoplasm. The enzyme catalyses apo-[ACP] + CoA = holo-[ACP] + adenosine 3',5'-bisphosphate + H(+). In terms of biological role, transfers the 4'-phosphopantetheine moiety from coenzyme A to a Ser of acyl-carrier-protein. The polypeptide is Holo-[acyl-carrier-protein] synthase (Staphylococcus aureus (strain USA300)).